We begin with the raw amino-acid sequence, 633 residues long: Terminal nucleotidyltransferase 4B (633 aa).

A disordered region spans residues 1–115; the sequence is MFRSGERPLG…GGGRADGGGG (115 aa). A compositionally biased stretch (polar residues) spans 25 to 34; that stretch reads ETTNNNNNHH. Low complexity-rich tracts occupy residues 36-52 and 60-70; these read PAAW…ASPV and RPAAALPASES. Positions 87 to 98 are enriched in polar residues; the sequence is ASTYGLNYSLLQ. Residues 103–115 show a composition bias toward gly residues; sequence RAAGGGRADGGGG. Mg(2+) contacts are provided by aspartate 191 and aspartate 193. Positions 254, 279, 297, 298, 382, and 386 each coordinate ATP. A PAP-associated domain is found at 322 to 382; that stretch reads NYGVLLIEFF…YIEDPLQPGN (61 aa). A disordered region spans residues 484–633; it reads LGKCRSNASE…RDAPLSELCR (150 aa). The segment covering 492-519 has biased composition (low complexity); sequence SEPLSKHSSNSSSGPVSSSSATQSSSSD. Lysine 531 is covalently cross-linked (Glycyl lysine isopeptide (Lys-Gly) (interchain with G-Cter in SUMO2)). A compositionally biased stretch (polar residues) spans 542 to 552; sequence RVGSQDVSLEV. Serine 545 is subject to Phosphoserine. Glycyl lysine isopeptide (Lys-Gly) (interchain with G-Cter in SUMO2) cross-links involve residues lysine 558, lysine 573, and lysine 587. Positions 559–614 are enriched in polar residues; sequence MQSTQTTNTPNNANKSQHGSARLFRSSSKGFQGTAQTSHGALMTSKQHQGKSNTQY. The Basic, involved in binding of the RNA primer signature appears at 618-624; it reads KKRRHKR.

Belongs to the DNA polymerase type-B-like family. As to quaternary structure, component of a nucleolar TRAMP-like complex, an ATP-dependent exosome regulatory complex consisting of a helicase (MTREX), an oligadenylate polymerase (TENT4B or TENT4A), and a substrate specific RNA-binding factor (ZCCHC7 or ZCCHC8). Several TRAMP-like complexes exist with specific compositions and are associated with nuclear, or nucleolar RNA exosomes. The cofactor is Mg(2+). Mn(2+) is required as a cofactor.

The protein resides in the nucleus. The protein localises to the nucleolus. Its subcellular location is the cytoplasm. It catalyses the reaction RNA(n) + ATP = RNA(n)-3'-adenine ribonucleotide + diphosphate. Functionally, terminal nucleotidyltransferase that catalyzes preferentially the transfer of ATP and GTP on RNA 3' poly(A) tail creating a heterogeneous 3' poly(A) tail leading to mRNAs stabilization by protecting mRNAs from active deadenylation. Also functions as a catalytic subunit of a TRAMP-like complex which has a poly(A) RNA polymerase activity and is involved in a post-transcriptional quality control mechanism. Polyadenylation with short oligo(A) tails is required for the degradative activity of the exosome on several of its nuclear RNA substrates. Doesn't need a cofactor for polyadenylation activity (in vitro). Plays a role in replication-dependent histone mRNA degradation, probably through terminal uridylation of mature histone mRNAs. May play a role in sister chromatid cohesion. The polypeptide is Terminal nucleotidyltransferase 4B (Mus musculus (Mouse)).